Consider the following 693-residue polypeptide: Glycine--tRNA ligase beta subunit (693 aa).

A compositionally biased stretch (basic and acidic residues) spans 65 to 74 (QPDKSVEKRG). The tract at residues 65–84 (QPDKSVEKRGPAVKAAFDDS) is disordered.

Belongs to the class-II aminoacyl-tRNA synthetase family. In terms of assembly, tetramer of two alpha and two beta subunits.

The protein resides in the cytoplasm. It catalyses the reaction tRNA(Gly) + glycine + ATP = glycyl-tRNA(Gly) + AMP + diphosphate. The protein is Glycine--tRNA ligase beta subunit of Marinobacter nauticus (strain ATCC 700491 / DSM 11845 / VT8) (Marinobacter aquaeolei).